Consider the following 386-residue polypeptide: Enoyl-[acyl-carrier-protein] reductase 2, mitochondrial (386 aa).

Residues 1 to 22 (MYSVLKQSIRPRLLATHNQFRT) constitute a mitochondrion transit peptide. Tyr79 acts as the Proton donor in catalysis. NADP(+) is bound by residues Asn172, 199-202 (TSAV), 222-224 (RDR), 296-299 (YGGM), 321-323 (FWV), and Lys381.

The protein belongs to the zinc-containing alcohol dehydrogenase family. Quinone oxidoreductase subfamily. As to quaternary structure, homodimer and heterodimer with ETR1.

The protein resides in the mitochondrion. It carries out the reaction a 2,3-saturated acyl-[ACP] + NADP(+) = a (2E)-enoyl-[ACP] + NADPH + H(+). Functionally, required for respiration and the maintenance of the mitochondrial compartment. Oxidoreductase with a preference for short and medium chain substrates, including trans-2-hexenoyl-CoA (C6), trans-2-decenoyl-CoA (C10), and trans-2-hexadecenoyl-CoA (C16). May play a role in mitochondrial fatty acid synthesis. This Candida tropicalis (Yeast) protein is Enoyl-[acyl-carrier-protein] reductase 2, mitochondrial (ETR2).